A 444-amino-acid polypeptide reads, in one-letter code: Putative methylesterase 13, chloroplastic (444 aa).

3 disordered regions span residues 1 to 32 (MGNS…KYKY), 49 to 90 (PSLS…KDSH), and 124 to 176 (SVVY…QLVD). The N-terminal 60 residues, 1–60 (MGNSFTCISHEQEQRPKKSSGGGGNNSGKYKYVRRLSLMPSFRRRTLLPSLSCSGSSSTS), are a transit peptide targeting the chloroplast. Residues 49–64 (PSLSCSGSSSTSSSKK) show a composition bias toward low complexity. The segment covering 65-82 (GGIKAKTKKIRERHHHHH) has biased composition (basic residues). Positions 124-148 (SVVYPSAQPSGTSSGPVSAVQTPKK) are enriched in polar residues. Residues 149–164 (SSAGFVRSSSSRQRSS) show a composition bias toward low complexity. The AB hydrolase-1 domain maps to 190-310 (FVLVHGGGFG…LFNQQLGSND (121 aa)). The active-site Acyl-ester intermediate is Asp264. Active-site charge relay system residues include Asp390 and His418.

This sequence belongs to the AB hydrolase superfamily. Methylesterase family.

It localises to the plastid. The protein localises to the chloroplast. In terms of biological role, putative methylesterase. The protein is Putative methylesterase 13, chloroplastic of Arabidopsis thaliana (Mouse-ear cress).